A 405-amino-acid chain; its full sequence is MSEKRRDNKGRILKTGESQRKDGRYLYKYIDSFGEPQFVYSWKLVATDRVPAGKRDCISLREKIAELQKDIHDGIDVVGKKMTLCQLYAKQNAQRPKVRKNTETGRKYLMDILKKDKLGVRSIDSIKPSDAKEWAIRMSENGYAYQTINNYKRSLKASFYIAIQDDCVRKNPFDFQLKAVLDDDTVPKTVLTEEQEEKLLAFAKADKTYSKNYDEILILLKTGLRISEFGGLTLPDLDFENRLVNIDHQLLRDTEIGYYIETPKTKSGERQVPMVEEAYQAFKRVLANRKNDKRVEIDGYSDFLFLNRKNYPKVASDYNGMMKGLVKKYNKYNEDKLPHITPHSLRHTFCTNYANAGMNPKALQYIMGHANIAMTLNYYAHATFDSAMAEMKRLNKEKQQERLVA.

The 85-residue stretch at 79-163 folds into the Core-binding (CB) domain; the sequence is GKKMTLCQLY…SLKASFYIAI (85 aa). A Tyr recombinase domain is found at 186–392; that stretch reads VPKTVLTEEQ…TFDSAMAEMK (207 aa). Active-site residues include arginine 225, lysine 264, histidine 343, arginine 346, and histidine 369. The O-(3'-phospho-DNA)-tyrosine intermediate role is filled by tyrosine 379.

It belongs to the 'phage' integrase family.

In Streptococcus agalactiae serotype V (strain ATCC BAA-611 / 2603 V/R), this protein is Transposase from transposon Tn1545 (int).